We begin with the raw amino-acid sequence, 196 residues long: ATP-dependent Clp protease proteolytic subunit (196 aa).

S101 serves as the catalytic Nucleophile. H126 is an active-site residue.

Belongs to the peptidase S14 family. As to quaternary structure, component of the chloroplastic Clp protease core complex.

The protein localises to the plastid. The protein resides in the chloroplast stroma. The enzyme catalyses Hydrolysis of proteins to small peptides in the presence of ATP and magnesium. alpha-casein is the usual test substrate. In the absence of ATP, only oligopeptides shorter than five residues are hydrolyzed (such as succinyl-Leu-Tyr-|-NHMec, and Leu-Tyr-Leu-|-Tyr-Trp, in which cleavage of the -Tyr-|-Leu- and -Tyr-|-Trp bonds also occurs).. Functionally, cleaves peptides in various proteins in a process that requires ATP hydrolysis. Has a chymotrypsin-like activity. Plays a major role in the degradation of misfolded proteins. This Lotus japonicus (Lotus corniculatus var. japonicus) protein is ATP-dependent Clp protease proteolytic subunit.